The primary structure comprises 154 residues: MVQAVAVLKGDAGVSGVVKFEQASESEPTTVSYEIAGNSPNAERGFHIHEFGDATNGCVSAGPHFNPFKKTHGAPTDEVRHVGDMGNVKTDENGVAKGSFKDSLIKLIGPTSVVGRSVVIHAGQDDLGKGDTEESLKTGNAGPRPACGVIGLTN.

Lys-19 is covalently cross-linked (Glycyl lysine isopeptide (Lys-Gly) (interchain with G-Cter in SUMO)). Residues Ser-26 and Ser-39 each carry the phosphoserine modification. Glu-43 provides a ligand contact to Zn(2+). Residues His-47, His-49, and His-64 each contribute to the Cu cation site. Cysteines 58 and 147 form a disulfide. His-64 lines the Zn(2+) pocket. A Glycyl lysine isopeptide (Lys-Gly) (interchain with G-Cter in SUMO) cross-link involves residue Lys-70. Zn(2+) contacts are provided by His-72, His-81, and Asp-84. Ser-99 and Ser-117 each carry phosphoserine. Residue His-121 coordinates Cu cation. Phosphothreonine is present on residues Thr-132 and Thr-138. Arg-144 contacts substrate.

It belongs to the Cu-Zn superoxide dismutase family. Homodimer in holo form. In apo form, heterodimer with CCS1. Zinc-binding at 'His-16' of CCS1 and Glu-43 of apo-SOD1 is required for this heterodimerization. Requires Cu cation as cofactor. The cofactor is Zn(2+).

Its subcellular location is the cytoplasm. It localises to the mitochondrion intermembrane space. The enzyme catalyses 2 superoxide + 2 H(+) = H2O2 + O2. Functionally, destroys radicals which are normally produced within the cells and which are toxic to biological systems. This is Superoxide dismutase [Cu-Zn] from Saccharomyces cerevisiae (strain ATCC 204508 / S288c) (Baker's yeast).